We begin with the raw amino-acid sequence, 1075 residues long: Putative type I restriction enzyme MjaVIIP endonuclease subunit (1075 aa).

It belongs to the HsdR family. As to quaternary structure, the type I restriction/modification system is composed of three polypeptides R, M and S.

The catalysed reaction is Endonucleolytic cleavage of DNA to give random double-stranded fragments with terminal 5'-phosphates, ATP is simultaneously hydrolyzed.. The restriction (R) subunit of a type I restriction enzyme that recognizes 5'-CAAN(7)TGG-3' and cleaves a random distance away. The R subunit is required for both endonuclease and ATPase activities but not for modification. After locating a non-methylated recognition site, the enzyme complex serves as a molecular motor that translocates DNA in an ATP-dependent manner until a collision occurs that triggers cleavage. The protein is Putative type I restriction enzyme MjaVIIP endonuclease subunit of Methanocaldococcus jannaschii (strain ATCC 43067 / DSM 2661 / JAL-1 / JCM 10045 / NBRC 100440) (Methanococcus jannaschii).